Consider the following 157-residue polypeptide: NADPH-dependent 7-cyano-7-deazaguanine reductase (157 aa).

The Thioimide intermediate role is filled by Cys56. The active-site Proton donor is the Asp63. Residues 78–80 (VES) and 97–98 (HE) each bind substrate.

It belongs to the GTP cyclohydrolase I family. QueF type 1 subfamily.

Its subcellular location is the cytoplasm. The catalysed reaction is 7-aminomethyl-7-carbaguanine + 2 NADP(+) = 7-cyano-7-deazaguanine + 2 NADPH + 3 H(+). It participates in tRNA modification; tRNA-queuosine biosynthesis. Its function is as follows. Catalyzes the NADPH-dependent reduction of 7-cyano-7-deazaguanine (preQ0) to 7-aminomethyl-7-deazaguanine (preQ1). The sequence is that of NADPH-dependent 7-cyano-7-deazaguanine reductase from Parabacteroides distasonis (strain ATCC 8503 / DSM 20701 / CIP 104284 / JCM 5825 / NCTC 11152).